Reading from the N-terminus, the 157-residue chain is Probable succinate transporter subunit YjjB (157 aa).

A run of 4 helical transmembrane segments spans residues I6 to M26, V51 to G71, V87 to I107, and F129 to W149.

It belongs to the ThrE exporter (TC 2.A.79) family. As to quaternary structure, the transporter is composed of YjjB and YjjP.

It localises to the cell inner membrane. Its function is as follows. Involved in succinate export with YjjP. Both proteins are required for export. The polypeptide is Probable succinate transporter subunit YjjB (Proteus mirabilis (strain HI4320)).